The primary structure comprises 89 residues: UPF0335 protein Nwi_0989 (89 aa).

This sequence belongs to the UPF0335 family.

The polypeptide is UPF0335 protein Nwi_0989 (Nitrobacter winogradskyi (strain ATCC 25391 / DSM 10237 / CIP 104748 / NCIMB 11846 / Nb-255)).